Here is a 197-residue protein sequence, read N- to C-terminus: NAD(P)H-quinone oxidoreductase subunit 6, chloroplastic (197 aa).

Helical transmembrane passes span 10 to 30 (FVLALVELGILLGSLGAVLLV), 39 to 59 (LGLVFTCISLLYFVLNADFVA), 60 to 80 (AAQLLVYVGAINVLTVFAVMI), 94 to 114 (IGYIITAGTCTILFSILSFVI), and 147 to 167 (LLGEFVIPFELLSILLLAALV).

Belongs to the complex I subunit 6 family. NDH is composed of at least 16 different subunits, 5 of which are encoded in the nucleus.

It localises to the plastid. The protein resides in the chloroplast thylakoid membrane. It catalyses the reaction a plastoquinone + NADH + (n+1) H(+)(in) = a plastoquinol + NAD(+) + n H(+)(out). It carries out the reaction a plastoquinone + NADPH + (n+1) H(+)(in) = a plastoquinol + NADP(+) + n H(+)(out). Its function is as follows. NDH shuttles electrons from NAD(P)H:plastoquinone, via FMN and iron-sulfur (Fe-S) centers, to quinones in the photosynthetic chain and possibly in a chloroplast respiratory chain. The immediate electron acceptor for the enzyme in this species is believed to be plastoquinone. Couples the redox reaction to proton translocation, and thus conserves the redox energy in a proton gradient. In Adiantum capillus-veneris (Maidenhair fern), this protein is NAD(P)H-quinone oxidoreductase subunit 6, chloroplastic (ndhG).